The primary structure comprises 155 residues: 3-hydroxyacyl-[acyl-carrier-protein] dehydratase FabZ (155 aa).

H54 is an active-site residue.

It belongs to the thioester dehydratase family. FabZ subfamily.

Its subcellular location is the cytoplasm. The enzyme catalyses a (3R)-hydroxyacyl-[ACP] = a (2E)-enoyl-[ACP] + H2O. Its function is as follows. Involved in unsaturated fatty acids biosynthesis. Catalyzes the dehydration of short chain beta-hydroxyacyl-ACPs and long chain saturated and unsaturated beta-hydroxyacyl-ACPs. The polypeptide is 3-hydroxyacyl-[acyl-carrier-protein] dehydratase FabZ (Burkholderia mallei (strain NCTC 10247)).